Reading from the N-terminus, the 753-residue chain is Centromere protein I (753 aa).

Basic residues predominate over residues 1–15 (MQRRQSSKHSKRPLQ). The segment at 1–54 (MQRRQSSKHSKRPLQVHHSNQTDLSAWRKGGTVDTEKSAQNRQSLSDQKNDNEQ) is disordered.

It belongs to the CENP-I/CTF3 family. As to quaternary structure, component of the CENPA-HI complex, at least composed of CENPH, CENPI, CENPK, CENPL, CENPM, CENPO and CENPP.

The protein localises to the nucleus. Its subcellular location is the chromosome. The protein resides in the centromere. Its function is as follows. Component of the CENPA-HI complex, a centromeric complex involved in assembly of kinetochore proteins, mitotic progression and chromosome segregation. Required for the localization of CENPC but not CENPA to the centromere. It however may be involved in incorporation of newly synthesized CENPA into centromeres via its interaction with the CENPA-NAC complex. The chain is Centromere protein I (CENPI) from Gallus gallus (Chicken).